We begin with the raw amino-acid sequence, 378 residues long: Queuine tRNA-ribosyltransferase (378 aa).

The active-site Proton acceptor is D91. Residues 91–95 (DSGGF), D145, Q189, and G216 each bind substrate. The RNA binding stretch occupies residues 247–253 (GVGKPED). D266 serves as the catalytic Nucleophile. The segment at 271-275 (TRNAR) is RNA binding; important for wobble base 34 recognition. 4 residues coordinate Zn(2+): C304, C306, C309, and H335.

It belongs to the queuine tRNA-ribosyltransferase family. In terms of assembly, homodimer. Within each dimer, one monomer is responsible for RNA recognition and catalysis, while the other monomer binds to the replacement base PreQ1. It depends on Zn(2+) as a cofactor.

It catalyses the reaction 7-aminomethyl-7-carbaguanine + guanosine(34) in tRNA = 7-aminomethyl-7-carbaguanosine(34) in tRNA + guanine. Its pathway is tRNA modification; tRNA-queuosine biosynthesis. Catalyzes the base-exchange of a guanine (G) residue with the queuine precursor 7-aminomethyl-7-deazaguanine (PreQ1) at position 34 (anticodon wobble position) in tRNAs with GU(N) anticodons (tRNA-Asp, -Asn, -His and -Tyr). Catalysis occurs through a double-displacement mechanism. The nucleophile active site attacks the C1' of nucleotide 34 to detach the guanine base from the RNA, forming a covalent enzyme-RNA intermediate. The proton acceptor active site deprotonates the incoming PreQ1, allowing a nucleophilic attack on the C1' of the ribose to form the product. After dissociation, two additional enzymatic reactions on the tRNA convert PreQ1 to queuine (Q), resulting in the hypermodified nucleoside queuosine (7-(((4,5-cis-dihydroxy-2-cyclopenten-1-yl)amino)methyl)-7-deazaguanosine). The protein is Queuine tRNA-ribosyltransferase of Vibrio campbellii (strain ATCC BAA-1116).